A 188-amino-acid polypeptide reads, in one-letter code: Protein SSX5 (188 aa).

One can recognise a KRAB-related domain in the interval 20–83 (KMQKAFDDIA…KRVADFQGND (64 aa)). The disordered stretch occupies residues 78-188 (DFQGNDFDND…EISDPQEDDE (111 aa)). Over residues 112–122 (TPEKPAEEGND) the composition is skewed to basic and acidic residues. Over residues 144–155 (KLNTSEKVNKTS) the composition is skewed to polar residues. Positions 156 to 170 (GPKRGKHAWTHRVRE) are enriched in basic residues. Residues 179 to 188 (EISDPQEDDE) show a composition bias toward acidic residues.

It belongs to the SSX family.

Its function is as follows. Could act as a modulator of transcription. This is Protein SSX5 (SSX5) from Homo sapiens (Human).